The primary structure comprises 474 residues: Trehalose-6-phosphate synthase (474 aa).

Arg-10 is a binding site for D-glucose 6-phosphate. Residue 22–23 (GG) participates in UDP-alpha-D-glucose binding. Positions 77 and 131 each coordinate D-glucose 6-phosphate. UDP-alpha-D-glucose-binding residues include Arg-263 and Lys-268. Position 301 (Arg-301) interacts with D-glucose 6-phosphate. UDP-alpha-D-glucose is bound by residues Phe-340 and 366–370 (LVAKE).

It belongs to the glycosyltransferase 20 family. As to quaternary structure, homotetramer.

It carries out the reaction D-glucose 6-phosphate + UDP-alpha-D-glucose = alpha,alpha-trehalose 6-phosphate + UDP + H(+). It functions in the pathway glycan biosynthesis; trehalose biosynthesis. Its function is as follows. Probably involved in the osmoprotection via the biosynthesis of trehalose. Catalyzes the transfer of glucose from UDP-alpha-D-glucose (UDP-Glc) to D-glucose 6-phosphate (Glc-6-P) to form trehalose-6-phosphate. Acts with retention of the anomeric configuration of the UDP-sugar donor. This is Trehalose-6-phosphate synthase from Escherichia coli O6:K15:H31 (strain 536 / UPEC).